A 326-amino-acid chain; its full sequence is NADH-quinone oxidoreductase subunit H (326 aa).

Transmembrane regions (helical) follow at residues 11 to 31 (ILLS…CGAF), 81 to 101 (VIFT…FAIV), 114 to 134 (IGIL…LFAG), 154 to 174 (LSYE…AGSF), 186 to 206 (LWNV…GVAV), 237 to 257 (FFVG…TLFF), 265 to 285 (LPPF…FILI), and 302 to 322 (WKVC…VILW).

The protein belongs to the complex I subunit 1 family. In terms of assembly, NDH-1 is composed of 13 different subunits. Subunits NuoA, H, J, K, L, M, N constitute the membrane sector of the complex.

The protein localises to the cell inner membrane. It catalyses the reaction a quinone + NADH + 5 H(+)(in) = a quinol + NAD(+) + 4 H(+)(out). Its function is as follows. NDH-1 shuttles electrons from NADH, via FMN and iron-sulfur (Fe-S) centers, to quinones in the respiratory chain. The immediate electron acceptor for the enzyme in this species is believed to be ubiquinone. Couples the redox reaction to proton translocation (for every two electrons transferred, four hydrogen ions are translocated across the cytoplasmic membrane), and thus conserves the redox energy in a proton gradient. This subunit may bind ubiquinone. In Cronobacter sakazakii (strain ATCC BAA-894) (Enterobacter sakazakii), this protein is NADH-quinone oxidoreductase subunit H.